Consider the following 433-residue polypeptide: Glutamate-1-semialdehyde 2,1-aminomutase (433 aa).

K269 is modified (N6-(pyridoxal phosphate)lysine).

Belongs to the class-III pyridoxal-phosphate-dependent aminotransferase family. HemL subfamily. Homodimer. Requires pyridoxal 5'-phosphate as cofactor.

The protein localises to the cytoplasm. The catalysed reaction is (S)-4-amino-5-oxopentanoate = 5-aminolevulinate. The protein operates within porphyrin-containing compound metabolism; protoporphyrin-IX biosynthesis; 5-aminolevulinate from L-glutamyl-tRNA(Glu): step 2/2. The chain is Glutamate-1-semialdehyde 2,1-aminomutase from Renibacterium salmoninarum (strain ATCC 33209 / DSM 20767 / JCM 11484 / NBRC 15589 / NCIMB 2235).